Here is a 281-residue protein sequence, read N- to C-terminus: LIM domain-containing protein G (281 aa).

3 consecutive LIM zinc-binding domains span residues 40 to 101 (LNCS…IKFN), 141 to 205 (DICT…SKQV), and 206 to 262 (NCFA…FTQP).

The polypeptide is LIM domain-containing protein G (limG) (Dictyostelium discoideum (Social amoeba)).